The following is a 216-amino-acid chain: Somatotropin (216 aa).

The N-terminal stretch at 1-26 is a signal peptide; the sequence is MAAGSWTAGLLAFALLCLPWPQEASA. Zn(2+) is bound at residue His45. An intrachain disulfide couples Cys78 to Cys189. Ser131 is subject to Phosphoserine. Glu198 is a binding site for Zn(2+). Cys206 and Cys214 are disulfide-bonded.

Belongs to the somatotropin/prolactin family.

It is found in the secreted. Plays an important role in growth control. Its major role in stimulating body growth is to stimulate the liver and other tissues to secrete IGF1. It stimulates both the differentiation and proliferation of myoblasts. It also stimulates amino acid uptake and protein synthesis in muscle and other tissues. In Oryctolagus cuniculus (Rabbit), this protein is Somatotropin (GH1).